The primary structure comprises 388 residues: Succinate--CoA ligase [ADP-forming] subunit beta (388 aa).

Residues 9–244 (KEILRKFGVA…LDEEDPAEIE (236 aa)) form the ATP-grasp domain. Residues K46, 53–55 (GRG), E99, A102, and E107 contribute to the ATP site. 2 residues coordinate Mg(2+): N199 and D213. Substrate contacts are provided by residues N264 and 321–323 (GIM).

It belongs to the succinate/malate CoA ligase beta subunit family. In terms of assembly, heterotetramer of two alpha and two beta subunits. Mg(2+) is required as a cofactor.

The enzyme catalyses succinate + ATP + CoA = succinyl-CoA + ADP + phosphate. The catalysed reaction is GTP + succinate + CoA = succinyl-CoA + GDP + phosphate. It functions in the pathway carbohydrate metabolism; tricarboxylic acid cycle; succinate from succinyl-CoA (ligase route): step 1/1. Succinyl-CoA synthetase functions in the citric acid cycle (TCA), coupling the hydrolysis of succinyl-CoA to the synthesis of either ATP or GTP and thus represents the only step of substrate-level phosphorylation in the TCA. The beta subunit provides nucleotide specificity of the enzyme and binds the substrate succinate, while the binding sites for coenzyme A and phosphate are found in the alpha subunit. The sequence is that of Succinate--CoA ligase [ADP-forming] subunit beta from Burkholderia vietnamiensis (strain G4 / LMG 22486) (Burkholderia cepacia (strain R1808)).